Consider the following 381-residue polypeptide: Alkanesulfonate monooxygenase (381 aa).

The protein belongs to the SsuD family. Homotetramer.

It carries out the reaction an alkanesulfonate + FMNH2 + O2 = an aldehyde + FMN + sulfite + H2O + 2 H(+). Its function is as follows. Catalyzes the desulfonation of aliphatic sulfonates. In Escherichia coli (strain SE11), this protein is Alkanesulfonate monooxygenase.